Reading from the N-terminus, the 257-residue chain is Pimeloyl-[acyl-carrier protein] methyl ester esterase (257 aa).

An AB hydrolase-1 domain is found at 16–242 (LVLLHGWGLN…AAHAPFISHP (227 aa)). Substrate is bound by residues W22, 82–83 (SL), and 143–147 (FLGLQ). S82 acts as the Nucleophile in catalysis. Catalysis depends on residues D207 and H235. A substrate-binding site is contributed by H235.

It belongs to the AB hydrolase superfamily. Carboxylesterase BioH family. In terms of assembly, monomer.

It is found in the cytoplasm. The catalysed reaction is 6-carboxyhexanoyl-[ACP] methyl ester + H2O = 6-carboxyhexanoyl-[ACP] + methanol + H(+). It participates in cofactor biosynthesis; biotin biosynthesis. Functionally, the physiological role of BioH is to remove the methyl group introduced by BioC when the pimeloyl moiety is complete. It allows to synthesize pimeloyl-ACP via the fatty acid synthetic pathway through the hydrolysis of the ester bonds of pimeloyl-ACP esters. This Sodalis glossinidius (strain morsitans) protein is Pimeloyl-[acyl-carrier protein] methyl ester esterase.